A 172-amino-acid polypeptide reads, in one-letter code: Stellate protein CG33247 (172 aa).

The protein belongs to the casein kinase 2 subunit beta family. As to quaternary structure, interacts in vitro with the casein kinase 2 alpha subunit (CkII-alpha). The relevance of such interaction is however unclear in vivo. In terms of tissue distribution, probably not expressed in wild-type flies. In males lacking the Y chromosome, it is testis-specific and constitutes the main component of star-shaped crystals.

Its function is as follows. Unknown. In males lacking the Y chromosome, its strong overexpression leads to the appearance of proteinaceous star-shaped crystals in the primary spermatocytes causing meiotic drive, possibly by interfering with normal casein kinase 2 activity. The protein is Stellate protein CG33247 (Ste:CG33247) of Drosophila melanogaster (Fruit fly).